The sequence spans 969 residues: MIKTLLRRMSSNTTIPTPNGSNHWTASKVRSTFLDYFKKQQHTYVPSSSVVPHNDPTLLFANAGMNQYKPIFLGTVDPASDFASLKRAANSQKCIRAGGKHNDLEDVGRDSYHHTFFEMLGNWSFGDYFKKEAIDYSWELLTKVYGLQEDRLYVTYFGGDEKQGLEPDLEAKNFWLKVGVPEDHILPGSVEDNFWEMGDQGPCGPCSEIHYDRIGGRNASALVNMDDPNVLEVWNVVFIQYNREADGNLRTLPNKHIDTGMGFERLVSILQNKYSNYDTDVFLPIFDKIREITGVRPYTGKFGNEDKDGIDTAYRVIADHVRTLTFAICDGGVPNNEGRGYVLRRILRRGSRYVRKYMNYPIGGFFQQLVDVVIEQNKEIFPEISSGAQDLKEILNEEELSFAKTLDRGEKLFEQYAIIASKTPEQTLSGKDVWRLYDTYGFPVDLTRLMAEEAGLKIDEEGFERAKEESREASKGSGTKDGKTLVKLDVHALSELDQNDAIPKTNDEFKYGLENVKAKVVGIYDGSKFVDSIEDPSIQYGILLDKTPFYAEQGGQEYDTGKLVIDGKSEFNVANVQVYAGYVLHTGNIVDGKLNVGDEIIATYDELRRWPIRNNHTGTHILNFALREVLGDGVDQKGSLVAPEKLRFDFSHKQAVTAKELEKIEAISNKYIKNNDKVYYKDVSLTKAKEINGLRAVFGETYPDPVRVVSIGVSVDDLLADPTNTKWHEISIEFCGGTHVAKTGDIKDLVIIEESGIAKGIRRIVAVTGHDAHHVQKVANEFEQEIDNASSLPFGVAKESKSKELGVALKKLSISVLDKQRLTEKFNKLDKSIKDNLKAKQKEETKKTLDVVNNWLNDKENASSFLVAHVPITANAKAITEAINLIKKQDKTKSIYLLTGETDKVAHGCYVSDEAIAKGINANELAKAVSENIGGKAGGKGNIVQGMGDKPQGINTAIEEVTKLFKEKL.

The transit peptide at 1–8 directs the protein to the mitochondrion; that stretch reads MIKTLLRR. 4 residues coordinate Zn(2+): His616, His620, Cys735, and His739.

The protein belongs to the class-II aminoacyl-tRNA synthetase family. Monomer. Zn(2+) is required as a cofactor.

It is found in the mitochondrion. Its subcellular location is the cytoplasm. It catalyses the reaction tRNA(Ala) + L-alanine + ATP = L-alanyl-tRNA(Ala) + AMP + diphosphate. Catalyzes the attachment of alanine to tRNA(Ala) in a two-step reaction: alanine is first activated by ATP to form Ala-AMP and then transferred to the acceptor end of tRNA(Ala). Also edits incorrectly charged tRNA(Ala) via its editing domain. This is Alanine--tRNA ligase from Candida albicans (strain SC5314 / ATCC MYA-2876) (Yeast).